Reading from the N-terminus, the 427-residue chain is Enolase (427 aa).

(2R)-2-phosphoglycerate is bound at residue Gln-163. Catalysis depends on Glu-205, which acts as the Proton donor. 3 residues coordinate Mg(2+): Asp-242, Glu-288, and Asp-315. (2R)-2-phosphoglycerate-binding residues include Lys-340, Arg-369, Ser-370, and Lys-391. Lys-340 (proton acceptor) is an active-site residue.

This sequence belongs to the enolase family. The cofactor is Mg(2+).

The protein resides in the cytoplasm. The protein localises to the secreted. Its subcellular location is the cell surface. It catalyses the reaction (2R)-2-phosphoglycerate = phosphoenolpyruvate + H2O. It functions in the pathway carbohydrate degradation; glycolysis; pyruvate from D-glyceraldehyde 3-phosphate: step 4/5. Its function is as follows. Catalyzes the reversible conversion of 2-phosphoglycerate (2-PG) into phosphoenolpyruvate (PEP). It is essential for the degradation of carbohydrates via glycolysis. The protein is Enolase of Amoebophilus asiaticus (strain 5a2).